The sequence spans 118 residues: Ribulose bisphosphate carboxylase small subunit 2 (118 aa).

It belongs to the RuBisCO small chain family. In terms of assembly, heterohexadecamer of 8 large and 8 small subunits.

RuBisCO catalyzes two reactions: the carboxylation of D-ribulose 1,5-bisphosphate, the primary event in carbon dioxide fixation, as well as the oxidative fragmentation of the pentose substrate. Both reactions occur simultaneously and in competition at the same active site. Although the small subunit is not catalytic it is essential for maximal activity. This Acidithiobacillus ferrooxidans (Thiobacillus ferrooxidans) protein is Ribulose bisphosphate carboxylase small subunit 2.